The primary structure comprises 169 residues: Cell division inhibitor SulA (169 aa).

Positions Ala106 to Tyr112 are ftsZ binding. The tract at residues Lys162–His169 is lon protease binding.

The protein belongs to the SulA family. Interacts with FtsZ. Post-translationally, is rapidly cleaved and degraded by the Lon protease once DNA damage is repaired.

Component of the SOS system and an inhibitor of cell division. Accumulation of SulA causes rapid cessation of cell division and the appearance of long, non-septate filaments. In the presence of GTP, binds a polymerization-competent form of FtsZ in a 1:1 ratio, thus inhibiting FtsZ polymerization and therefore preventing it from participating in the assembly of the Z ring. This mechanism prevents the premature segregation of damaged DNA to daughter cells during cell division. This chain is Cell division inhibitor SulA, found in Escherichia coli O81 (strain ED1a).